A 633-amino-acid chain; its full sequence is MSAGSERGAAATPGGLPAPCASKVELRLSCRHLLDRDPLTKSDPSVALLQQAQGQWVQVGRTEVVRSSLHPVFSKVFTVDYYFEEVQRLRFEVYDTHGPSGFSCQEDDFLGGMECTLGQPAQKWLLQVVMRVSVDVLGPAGHCAKHFLCCTESSHLARTGPSFLLRYDDLCLPWATAGAVRWWTCRGGHTQGWQIVAQKKVTRPLLLKFGRNAGKSTITVIAEDISGNNGYVELSFRARKLDDKDLFSKSDPFLELYRVNDDQGLQLVYRTEVVKNNLNPVWEAFKVSLSSLCSCEETRPLKCLVWDYDSRGKHDFIGEFSTTFEEMQKAFEEGQAQWDCVNPKYKQKRRSYKNSGVVVLADLKFHRVYSFLDYIMGGCQIHFTVAIDFTASNGDPRNSCSLHYINPYQPNEYLKALVSVGEICQDYDSDKRFSALGFGARIPPKYEVSHDFAINFNPEDDECEGIQGVVEAYQNCLPRVQLYGPTNVAPIISKVARVAAAEESTGKASQYYILLILTDGVVTDMADTREAIVRASRLPMSIIIVGVGNADFTDMQVLDGDDGVLRSPRGEPALRDIVQFVPFRELKNASPAALAKCVLAEVPKQVVEYYSHRGLPPRSLGVPAGEASPGCTP.

C2 domains are found at residues 2 to 133 (SAGS…MRVS) and 212 to 339 (NAGK…AQWD). Ca(2+) is bound by residues D245, D251, D307, D309, and D315. The region spanning 382–581 (HFTVAIDFTA…PALRDIVQFV (200 aa)) is the VWFA domain.

It belongs to the copine family. Ca(2+) is required as a cofactor. In terms of tissue distribution, expressed in the brain, testis, thymus and small intestine.

The protein resides in the cytoplasm. The protein localises to the nucleus. Its subcellular location is the cell membrane. Its function is as follows. Calcium-dependent phospholipid-binding protein that may play a role in calcium-mediated intracellular processes. The chain is Copine-7 from Homo sapiens (Human).